Here is a 380-residue protein sequence, read N- to C-terminus: Queuine tRNA-ribosyltransferase (380 aa).

Asp-96 acts as the Proton acceptor in catalysis. Residues 96–100 (DSGGF), Asp-150, Gln-193, and Gly-220 contribute to the substrate site. The tract at residues 251-257 (GVGAPDS) is RNA binding. Catalysis depends on Asp-270, which acts as the Nucleophile. Residues 275–279 (TRIAR) form an RNA binding; important for wobble base 34 recognition region. Zn(2+) contacts are provided by Cys-308, Cys-310, Cys-313, and His-339.

It belongs to the queuine tRNA-ribosyltransferase family. Homodimer. Within each dimer, one monomer is responsible for RNA recognition and catalysis, while the other monomer binds to the replacement base PreQ1. Requires Zn(2+) as cofactor.

It carries out the reaction 7-aminomethyl-7-carbaguanine + guanosine(34) in tRNA = 7-aminomethyl-7-carbaguanosine(34) in tRNA + guanine. It functions in the pathway tRNA modification; tRNA-queuosine biosynthesis. In terms of biological role, catalyzes the base-exchange of a guanine (G) residue with the queuine precursor 7-aminomethyl-7-deazaguanine (PreQ1) at position 34 (anticodon wobble position) in tRNAs with GU(N) anticodons (tRNA-Asp, -Asn, -His and -Tyr). Catalysis occurs through a double-displacement mechanism. The nucleophile active site attacks the C1' of nucleotide 34 to detach the guanine base from the RNA, forming a covalent enzyme-RNA intermediate. The proton acceptor active site deprotonates the incoming PreQ1, allowing a nucleophilic attack on the C1' of the ribose to form the product. After dissociation, two additional enzymatic reactions on the tRNA convert PreQ1 to queuine (Q), resulting in the hypermodified nucleoside queuosine (7-(((4,5-cis-dihydroxy-2-cyclopenten-1-yl)amino)methyl)-7-deazaguanosine). The sequence is that of Queuine tRNA-ribosyltransferase from Streptococcus pyogenes serotype M1.